The primary structure comprises 469 residues: 3-isopropylmalate dehydratase large subunit (469 aa).

Positions 350, 410, and 413 each coordinate [4Fe-4S] cluster.

The protein belongs to the aconitase/IPM isomerase family. LeuC type 1 subfamily. In terms of assembly, heterodimer of LeuC and LeuD. [4Fe-4S] cluster serves as cofactor.

The enzyme catalyses (2R,3S)-3-isopropylmalate = (2S)-2-isopropylmalate. It functions in the pathway amino-acid biosynthesis; L-leucine biosynthesis; L-leucine from 3-methyl-2-oxobutanoate: step 2/4. In terms of biological role, catalyzes the isomerization between 2-isopropylmalate and 3-isopropylmalate, via the formation of 2-isopropylmaleate. This chain is 3-isopropylmalate dehydratase large subunit, found in Rhodopseudomonas palustris (strain ATCC BAA-98 / CGA009).